The primary structure comprises 491 residues: 3-octaprenyl-4-hydroxybenzoate carboxy-lyase (491 aa).

Mn(2+) is bound at residue asparagine 172. Prenylated FMN contacts are provided by residues 175-177, 189-191, and 194-195; these read IYR, RWL, and RG. A Mn(2+)-binding site is contributed by glutamate 238. The Proton donor role is filled by aspartate 287.

It belongs to the UbiD family. Homohexamer. It depends on prenylated FMN as a cofactor. The cofactor is Mn(2+).

The protein localises to the cell membrane. It catalyses the reaction a 4-hydroxy-3-(all-trans-polyprenyl)benzoate + H(+) = a 2-(all-trans-polyprenyl)phenol + CO2. It functions in the pathway cofactor biosynthesis; ubiquinone biosynthesis. Catalyzes the decarboxylation of 3-octaprenyl-4-hydroxy benzoate to 2-octaprenylphenol, an intermediate step in ubiquinone biosynthesis. The chain is 3-octaprenyl-4-hydroxybenzoate carboxy-lyase from Alcanivorax borkumensis (strain ATCC 700651 / DSM 11573 / NCIMB 13689 / SK2).